Here is a 354-residue protein sequence, read N- to C-terminus: Uroporphyrinogen decarboxylase (354 aa).

Substrate-binding positions include Arg27 to Arg31, Asp77, Tyr154, Thr209, and His327.

It belongs to the uroporphyrinogen decarboxylase family. Homodimer.

It localises to the cytoplasm. The enzyme catalyses uroporphyrinogen III + 4 H(+) = coproporphyrinogen III + 4 CO2. It functions in the pathway porphyrin-containing compound metabolism; protoporphyrin-IX biosynthesis; coproporphyrinogen-III from 5-aminolevulinate: step 4/4. Its function is as follows. Catalyzes the decarboxylation of four acetate groups of uroporphyrinogen-III to yield coproporphyrinogen-III. This Salmonella heidelberg (strain SL476) protein is Uroporphyrinogen decarboxylase.